The following is a 304-amino-acid chain: Ribosomal RNA small subunit methyltransferase H (304 aa).

S-adenosyl-L-methionine-binding positions include 37 to 39 (AGH), aspartate 57, phenylalanine 79, aspartate 100, and histidine 107.

Belongs to the methyltransferase superfamily. RsmH family.

The protein resides in the cytoplasm. It catalyses the reaction cytidine(1402) in 16S rRNA + S-adenosyl-L-methionine = N(4)-methylcytidine(1402) in 16S rRNA + S-adenosyl-L-homocysteine + H(+). In terms of biological role, specifically methylates the N4 position of cytidine in position 1402 (C1402) of 16S rRNA. This is Ribosomal RNA small subunit methyltransferase H from Bacteroides thetaiotaomicron (strain ATCC 29148 / DSM 2079 / JCM 5827 / CCUG 10774 / NCTC 10582 / VPI-5482 / E50).